The primary structure comprises 321 residues: Tyrosine recombinase XerC (321 aa).

The 92-residue stretch at 16–107 (SDIGQQIVRW…GLRSFARFLE (92 aa)) folds into the Core-binding (CB) domain. One can recognise a Tyr recombinase domain in the interval 128-315 (SVPKPIHMSA…DSERLLDVYR (188 aa)). Catalysis depends on residues R173, K199, H267, R270, and H293. Catalysis depends on Y302, which acts as the O-(3'-phospho-DNA)-tyrosine intermediate.

The protein belongs to the 'phage' integrase family. XerC subfamily. As to quaternary structure, forms a cyclic heterotetrameric complex composed of two molecules of XerC and two molecules of XerD.

It is found in the cytoplasm. Functionally, site-specific tyrosine recombinase, which acts by catalyzing the cutting and rejoining of the recombining DNA molecules. The XerC-XerD complex is essential to convert dimers of the bacterial chromosome into monomers to permit their segregation at cell division. It also contributes to the segregational stability of plasmids. This Nitrobacter winogradskyi (strain ATCC 25391 / DSM 10237 / CIP 104748 / NCIMB 11846 / Nb-255) protein is Tyrosine recombinase XerC.